We begin with the raw amino-acid sequence, 32 residues long: Natriuretic peptide Coa_NP2 (32 aa).

Cys8 and Cys24 are oxidised to a cystine.

Belongs to the natriuretic peptide family. Snake NP subfamily. Expressed by the venom gland.

It localises to the secreted. Functionally, snake venom natriuretic peptide that exhibits hypotensive and vasorelaxant effects. Produces a dose-dependent hypotension in rats, followed by significant increases in concentrations of markers of nitric oxide (NO) formation measured in the plasma and vasorelaxation in a thoracic aortic ring bath. The peptide may exert its hypotensive action, at least in part, through stimulation of NO production. The vasorelaxant effect is endothelium-dependent and does not appear to be mediated by the natriuretic peptide receptor-A, as its action is not modified by isatin (a potent NPR1 antagonist). May act by activating the natriuretic peptide receptor-B (NPR2). The chain is Natriuretic peptide Coa_NP2 from Crotalus lutosus abyssus (Grand Canyon rattlesnake).